Here is a 244-residue protein sequence, read N- to C-terminus: 5-oxoprolinase subunit A (244 aa).

It belongs to the LamB/PxpA family. As to quaternary structure, forms a complex composed of PxpA, PxpB and PxpC.

The catalysed reaction is 5-oxo-L-proline + ATP + 2 H2O = L-glutamate + ADP + phosphate + H(+). In terms of biological role, catalyzes the cleavage of 5-oxoproline to form L-glutamate coupled to the hydrolysis of ATP to ADP and inorganic phosphate. This chain is 5-oxoprolinase subunit A, found in Salmonella choleraesuis (strain SC-B67).